A 330-amino-acid chain; its full sequence is MQTNLLKPKAINVEQLGPNRAKVALEPFERGYGHTLGNAIRRVLLSSMVGYAATEVTIAGVLHEYSSIDGVQEDVVNILLNLKGVVFKLHNRDEVTLSLRKDGEGVVTARDIQTPHDVEIVNPEHVIATLSAGGKLDMQIKVEKGRGYVPGNLRRYADEATKSIGRIVLDASFSPVKRVSYTVESARVEQRTDLDKLVVEIETNGAITAEDAVRASAKILVEQLAVFAQLEGGELAAFDAPASSRGAATFDPILLRPVDELELTVRSANCLKAENIYYIGDLIQRTENELLKTPNLGRKSLNEIKEVLASRGLTLGMKLENWPPAGLDKR.

Residues 1–231 (MQTNLLKPKA…EQLAVFAQLE (231 aa)) form an alpha N-terminal domain (alpha-NTD) region. The tract at residues 250–330 (FDPILLRPVD…NWPPAGLDKR (81 aa)) is alpha C-terminal domain (alpha-CTD).

This sequence belongs to the RNA polymerase alpha chain family. As to quaternary structure, homodimer. The RNAP catalytic core consists of 2 alpha, 1 beta, 1 beta' and 1 omega subunit. When a sigma factor is associated with the core the holoenzyme is formed, which can initiate transcription.

The enzyme catalyses RNA(n) + a ribonucleoside 5'-triphosphate = RNA(n+1) + diphosphate. In terms of biological role, DNA-dependent RNA polymerase catalyzes the transcription of DNA into RNA using the four ribonucleoside triphosphates as substrates. The sequence is that of DNA-directed RNA polymerase subunit alpha from Acidovorax ebreus (strain TPSY) (Diaphorobacter sp. (strain TPSY)).